The following is a 1249-amino-acid chain: Clustered mitochondria protein homolog (1249 aa).

Positions 1–32 are disordered; it reads MAQTNGELEHSKETPEQLTNGNHPEETQEEDN. Residues 318–562 enclose the Clu domain; that stretch reads DITRSQENYL…RVTPLDVMWQ (245 aa). Basic and acidic residues predominate over residues 605 to 628; the sequence is KAEADAAKAESSEATESKEQASEE. 2 disordered regions span residues 605 to 636 and 868 to 903; these read KAEA…DQER and KAPA…AAKE. TPR repeat units follow at residues 974–1007, 1016–1049, and 1058–1091; these read AKLY…TERT, ILSY…WKII, and ITTM…CESL. The segment at 1174 to 1249 is disordered; that stretch reads NMNPRSLGTK…KLRGSKKSSA (76 aa). Residues 1176–1190 are compositionally biased toward polar residues; the sequence is NPRSLGTKIQPQVGQ.

This sequence belongs to the CLU family. As to quaternary structure, may associate with the eukaryotic translation initiation factor 3 (eIF-3) complex.

It is found in the cytoplasm. Functionally, mRNA-binding protein involved in proper cytoplasmic distribution of mitochondria. The protein is Clustered mitochondria protein homolog of Aspergillus niger (strain ATCC MYA-4892 / CBS 513.88 / FGSC A1513).